We begin with the raw amino-acid sequence, 61 residues long: Small ribosomal subunit protein uS14 (61 aa).

Positions 24, 27, 40, and 43 each coordinate Zn(2+).

It belongs to the universal ribosomal protein uS14 family. Zinc-binding uS14 subfamily. In terms of assembly, part of the 30S ribosomal subunit. Contacts proteins S3 and S10. Zn(2+) is required as a cofactor.

In terms of biological role, binds 16S rRNA, required for the assembly of 30S particles and may also be responsible for determining the conformation of the 16S rRNA at the A site. The chain is Small ribosomal subunit protein uS14 from Parafrankia sp. (strain EAN1pec).